Consider the following 211-residue polypeptide: N-(5'-phosphoribosyl)anthranilate isomerase (211 aa).

The protein belongs to the TrpF family.

It catalyses the reaction N-(5-phospho-beta-D-ribosyl)anthranilate = 1-(2-carboxyphenylamino)-1-deoxy-D-ribulose 5-phosphate. Its pathway is amino-acid biosynthesis; L-tryptophan biosynthesis; L-tryptophan from chorismate: step 3/5. The sequence is that of N-(5'-phosphoribosyl)anthranilate isomerase from Methanococcus maripaludis (strain DSM 14266 / JCM 13030 / NBRC 101832 / S2 / LL).